The chain runs to 174 residues: Glutamyl-tRNA(Gln) amidotransferase subunit F, mitochondrial (174 aa).

This sequence belongs to the GatF family. In terms of assembly, subunit of the heterotrimeric GatFAB amidotransferase (AdT) complex, composed of A, B and F subunits.

It is found in the mitochondrion inner membrane. The enzyme catalyses L-glutamyl-tRNA(Gln) + L-glutamine + ATP + H2O = L-glutaminyl-tRNA(Gln) + L-glutamate + ADP + phosphate + H(+). In terms of biological role, allows the formation of correctly charged Gln-tRNA(Gln) through the transamidation of misacylated Glu-tRNA(Gln) in the mitochondria. The reaction takes place in the presence of glutamine and ATP through an activated gamma-phospho-Glu-tRNA(Gln). Required for proper protein synthesis within the mitochondrion. The chain is Glutamyl-tRNA(Gln) amidotransferase subunit F, mitochondrial from Kluyveromyces lactis (strain ATCC 8585 / CBS 2359 / DSM 70799 / NBRC 1267 / NRRL Y-1140 / WM37) (Yeast).